The sequence spans 181 residues: Bifunctional protein PyrR (181 aa).

Residues 41–42 (TR), 105–113 (DDVLYTGRT), R138, and V162 each bind substrate. A PRPP-binding motif is present at residues 101–113 (VILVDDVLYTGRT).

Belongs to the purine/pyrimidine phosphoribosyltransferase family. PyrR subfamily. As to quaternary structure, homodimer and homohexamer; in equilibrium.

It catalyses the reaction UMP + diphosphate = 5-phospho-alpha-D-ribose 1-diphosphate + uracil. Its function is as follows. Regulates transcriptional attenuation of the pyrimidine nucleotide (pyr) operon by binding in a uridine-dependent manner to specific sites on pyr mRNA. This disrupts an antiterminator hairpin in the RNA and favors formation of a downstream transcription terminator, leading to a reduced expression of downstream genes. In terms of biological role, also displays a weak uracil phosphoribosyltransferase activity which is not physiologically significant. This chain is Bifunctional protein PyrR (pyrR), found in Bacillus subtilis (strain 168).